A 359-amino-acid chain; its full sequence is G-protein coupled receptor 15 (359 aa).

Topologically, residues 1–33 (MDPEETSVYLDYYYATSPNPDIRETHSHVPYTS) are extracellular. The chain crosses the membrane as a helical span at residues 34–54 (VFLPVFYTAVFLTGVLGNLVL). Residues 55–69 (MGALHFKPGSRRLID) are Cytoplasmic-facing. Residues 70–90 (IFIINLAASDFIFLVTLPLWV) traverse the membrane as a helical segment. The Extracellular portion of the chain corresponds to 91-120 (DKEASLGLWRTGSFLCKGSSYMISVNMHCS). The helical transmembrane segment at 121 to 141 (VFLLTCMSVDRYLAIVCPVVS) threads the bilayer. Residues 142-149 (RKFRRTDC) lie on the Cytoplasmic side of the membrane. Residues 150–170 (AYVVCASIWFISCLLGLPTLL) traverse the membrane as a helical segment. The Extracellular segment spans residues 171–192 (SRELTLIDDKPYCAEKKATPLK). A helical membrane pass occupies residues 193-213 (LIWSLVALIFTFFVPLLNIVT). Over 214–239 (CYCCIARKLCAHYQQSGRHNKKLKKS) the chain is Cytoplasmic. A helical transmembrane segment spans residues 240-260 (IKIILIVVAAFLVSWLPFNTF). The Extracellular portion of the chain corresponds to 261–283 (KLLAIVSGLQERYFPSAMLQLGM). The helical transmembrane segment at 284–304 (EVSGPLAFANSCVNPFIYYIF) threads the bilayer. Topologically, residues 305–359 (DSYIRRAIVHCLCPCLKNYDFGSSTETSDSHLTKALSTFIHAEDFTRRRKRSVSL) are cytoplasmic. A Phosphoserine modification is found at Ser358.

The protein belongs to the G-protein coupled receptor 1 family. As to quaternary structure, interacts with adapter YWHAE; this interaction promotes ER-to-Golgi transport of GPR15. Phosphorylation is necessary for YWHAE binding and efficient surface expression. In terms of processing, O-glycosylated. Sialylated O-glycans in the N-terminal tail inhibits binding of GPR15LG. Post-translationally, sulfation is required for efficient binding of GPR15LG.

The protein resides in the cell membrane. In terms of biological role, g protein-coupled receptor that plays an important role in immune homeostasis. Acts via its natural ligand GPR15LG, a chemokine-like polypeptide strongly expressed in gastrointestinal tissues. GPR15-GPR15LG signaling axis regulates intestinal homeostasis and inflammation through the migration of immune cells. Controls thereby the specific homing of T-cells, particularly FOXP3+ regulatory T-cells (Tregs), to the large intestine lamina propria. Also required for skin localization of thymus-derived dendritic epidermal T-cells. Plays an important role in mediating cytoprotective function as well as angiogenesis of thrombomodulin. Mechanistically, preferentially signals through the Gi/o pathway to inhibit adenylate cyclase activity and activate a phosphatidylinositol-calcium second messenger system that regulates the release of Ca(2+) ions from intracellular stores. The sequence is that of G-protein coupled receptor 15 (GPR15) from Macaca fascicularis (Crab-eating macaque).